The following is a 103-amino-acid chain: Cell division suppressor protein YneA (103 aa).

A LysM domain is found at 36-87 (VKIEVQEGDTLWELADRIKGGKTADKHKFIEWVADKNNLPTSVIKPGDVLIL).

This sequence belongs to the YneA family.

The protein localises to the cytoplasm. Inhibits cell division during the SOS response. Affects a later stage of the cell division protein assembly, after the assembly of the Z ring, by probably suppressing recruitment of FtsL and/or DivIC to the division machinery. This chain is Cell division suppressor protein YneA, found in Bacillus licheniformis (strain ATCC 14580 / DSM 13 / JCM 2505 / CCUG 7422 / NBRC 12200 / NCIMB 9375 / NCTC 10341 / NRRL NRS-1264 / Gibson 46).